Reading from the N-terminus, the 137-residue chain is MLQPSNRKYRKDFKGRNRGVASRGNRVSFGEFGLKATECARITARQLEAARRTIARHIKRGGKITIRIFPDKPITKKPLEVRQGKGKGSVEYWVALVQPGRMIFEIEGVDEALAREAFNRAAAKLPLKCLFVKRTVM.

A disordered region spans residues 1-20; it reads MLQPSNRKYRKDFKGRNRGV. Over residues 7 to 17 the composition is skewed to basic residues; it reads RKYRKDFKGRN.

The protein belongs to the universal ribosomal protein uL16 family. Part of the 50S ribosomal subunit.

Binds 23S rRNA and is also seen to make contacts with the A and possibly P site tRNAs. In Coxiella burnetii (strain CbuK_Q154) (Coxiella burnetii (strain Q154)), this protein is Large ribosomal subunit protein uL16.